The chain runs to 269 residues: MPELPEVETSRRGIEPHLVGNVIQYAVVRNGRLRWPVAEEIMKLSDQLVLSIQRRAKYLLIELANGWIIVHLGMSGSLRILPEERPAEKHDHVDLVMADGKVLRYTDPRRFGAWLWSDDLERCSVLAHLGPEPLSDDFNGFYLYTRSSNKKTLIKPWLMDNKLVVGVGNIYANEALFTAHIQPDRPAQTLTEREAHLLAETIKKVLQRSIERGGTTLRDFLQSDGKPGYFAQELFVYGRAGEPCRICGEQIESIKLGQRSTFFCRHCQY.

The active-site Schiff-base intermediate with DNA is the P2. E3 serves as the catalytic Proton donor. The Proton donor; for beta-elimination activity role is filled by K57. The DNA site is built by H90, R109, and K150. The segment at 235–269 (FVYGRAGEPCRICGEQIESIKLGQRSTFFCRHCQY) adopts an FPG-type zinc-finger fold. Residue R259 is the Proton donor; for delta-elimination activity of the active site.

The protein belongs to the FPG family. Monomer. The cofactor is Zn(2+).

It catalyses the reaction Hydrolysis of DNA containing ring-opened 7-methylguanine residues, releasing 2,6-diamino-4-hydroxy-5-(N-methyl)formamidopyrimidine.. The catalysed reaction is 2'-deoxyribonucleotide-(2'-deoxyribose 5'-phosphate)-2'-deoxyribonucleotide-DNA = a 3'-end 2'-deoxyribonucleotide-(2,3-dehydro-2,3-deoxyribose 5'-phosphate)-DNA + a 5'-end 5'-phospho-2'-deoxyribonucleoside-DNA + H(+). In terms of biological role, involved in base excision repair of DNA damaged by oxidation or by mutagenic agents. Acts as a DNA glycosylase that recognizes and removes damaged bases. Has a preference for oxidized purines, such as 7,8-dihydro-8-oxoguanine (8-oxoG). Has AP (apurinic/apyrimidinic) lyase activity and introduces nicks in the DNA strand. Cleaves the DNA backbone by beta-delta elimination to generate a single-strand break at the site of the removed base with both 3'- and 5'-phosphates. This Photorhabdus laumondii subsp. laumondii (strain DSM 15139 / CIP 105565 / TT01) (Photorhabdus luminescens subsp. laumondii) protein is Formamidopyrimidine-DNA glycosylase.